We begin with the raw amino-acid sequence, 121 residues long: Large ribosomal subunit protein uL22 (121 aa).

The protein belongs to the universal ribosomal protein uL22 family. In terms of assembly, part of the 50S ribosomal subunit.

Functionally, this protein binds specifically to 23S rRNA; its binding is stimulated by other ribosomal proteins, e.g. L4, L17, and L20. It is important during the early stages of 50S assembly. It makes multiple contacts with different domains of the 23S rRNA in the assembled 50S subunit and ribosome. The globular domain of the protein is located near the polypeptide exit tunnel on the outside of the subunit, while an extended beta-hairpin is found that lines the wall of the exit tunnel in the center of the 70S ribosome. In Pseudarthrobacter chlorophenolicus (strain ATCC 700700 / DSM 12829 / CIP 107037 / JCM 12360 / KCTC 9906 / NCIMB 13794 / A6) (Arthrobacter chlorophenolicus), this protein is Large ribosomal subunit protein uL22.